The chain runs to 266 residues: Large ribosomal subunit protein uL4 (266 aa).

It belongs to the universal ribosomal protein uL4 family. As to quaternary structure, part of the 50S ribosomal subunit.

One of the primary rRNA binding proteins, this protein initially binds near the 5'-end of the 23S rRNA. It is important during the early stages of 50S assembly. It makes multiple contacts with different domains of the 23S rRNA in the assembled 50S subunit and ribosome. Its function is as follows. Forms part of the polypeptide exit tunnel. The protein is Large ribosomal subunit protein uL4 of Sulfolobus acidocaldarius (strain ATCC 33909 / DSM 639 / JCM 8929 / NBRC 15157 / NCIMB 11770).